We begin with the raw amino-acid sequence, 652 residues long: DNA ligase (652 aa).

NAD(+)-binding positions include 29-33 (DSDYD), 78-79 (SL), and Glu107. Lys109 functions as the N6-AMP-lysine intermediate in the catalytic mechanism. Residues Arg130, Glu164, Lys278, and Lys302 each coordinate NAD(+). Zn(2+)-binding residues include Cys395, Cys398, Cys413, and Cys418. In terms of domain architecture, BRCT spans 577-652 (NSDAALFGLT…IEDEDWLRKF (76 aa)).

This sequence belongs to the NAD-dependent DNA ligase family. LigA subfamily. Mg(2+) serves as cofactor. The cofactor is Mn(2+).

The catalysed reaction is NAD(+) + (deoxyribonucleotide)n-3'-hydroxyl + 5'-phospho-(deoxyribonucleotide)m = (deoxyribonucleotide)n+m + AMP + beta-nicotinamide D-nucleotide.. Its function is as follows. DNA ligase that catalyzes the formation of phosphodiester linkages between 5'-phosphoryl and 3'-hydroxyl groups in double-stranded DNA using NAD as a coenzyme and as the energy source for the reaction. It is essential for DNA replication and repair of damaged DNA. The protein is DNA ligase of Streptococcus pyogenes serotype M6 (strain ATCC BAA-946 / MGAS10394).